A 129-amino-acid polypeptide reads, in one-letter code: MARPKRTVKKREKKNVPVGLAHIQATFNNTIVTFTDTRGNTISWASAGQSGFKGSRKSTPFAAQMAAEQAAKKAQENGMRTVGIYVKGPGSGREAAMRAINAAGFKVAFIRDITPIPHNGCRPPKRRRV.

The protein belongs to the universal ribosomal protein uS11 family. As to quaternary structure, part of the 30S ribosomal subunit. Interacts with proteins S7 and S18. Binds to IF-3.

Its function is as follows. Located on the platform of the 30S subunit, it bridges several disparate RNA helices of the 16S rRNA. Forms part of the Shine-Dalgarno cleft in the 70S ribosome. In Nitratidesulfovibrio vulgaris (strain ATCC 29579 / DSM 644 / CCUG 34227 / NCIMB 8303 / VKM B-1760 / Hildenborough) (Desulfovibrio vulgaris), this protein is Small ribosomal subunit protein uS11.